A 476-amino-acid chain; its full sequence is 2-(3-amino-3-carboxypropyl)histidine synthase subunit 2 (476 aa).

Positions 1 to 15 (MTESAPSAFFTTSTP) are enriched in polar residues. The tract at residues 1–24 (MTESAPSAFFTTSTPADHVHEEES) is disordered. Cys102, Cys123, and Cys347 together coordinate [4Fe-4S] cluster. The disordered stretch occupies residues 451–476 (DGVSTAEDSTKMGEGRSGIAQGYSGK).

It belongs to the DPH1/DPH2 family. DPH2 subfamily. As to quaternary structure, component of the 2-(3-amino-3-carboxypropyl)histidine synthase complex composed of dph-1, dph-2, dph-3 and a NADH-dependent reductase. [4Fe-4S] cluster is required as a cofactor.

It functions in the pathway protein modification; peptidyl-diphthamide biosynthesis. Functionally, required for the first step of diphthamide biosynthesis, a post-translational modification of histidine which occurs in elongation factor 2. Dph-1 and dph-2 transfer a 3-amino-3-carboxypropyl (ACP) group from S-adenosyl-L-methionine (SAM) to a histidine residue, the reaction is assisted by a reduction system comprising dph-3 and a NADH-dependent reductase. Facilitates the reduction of the catalytic iron-sulfur cluster found in the dph-1 subunit. This chain is 2-(3-amino-3-carboxypropyl)histidine synthase subunit 2 (dph-2), found in Caenorhabditis elegans.